Here is a 409-residue protein sequence, read N- to C-terminus: Ligand-gated cation channel ZACN (409 aa).

The first 18 residues, 1-18, serve as a signal peptide directing secretion; it reads MAPRLLLLLLAFLRLGTT. The Extracellular portion of the chain corresponds to 19–233; the sequence is GPLVQGRGFR…LRLQNTALKA (215 aa). N-linked (GlcNAc...) asparagine glycosylation is found at N55 and N99. Cysteines 157 and 171 form a disulfide. A helical transmembrane segment spans residues 234-254; that stretch reads IIALLVPGEALLLADMCGGLL. The Cytoplasmic segment spans residues 255–265; the sequence is PLRATERIAYK. Residues 266 to 286 form a helical membrane-spanning segment; that stretch reads VTLLLGYLVFHSSLVQALPSS. Residues 287–296 are Extracellular-facing; sequence SSCNPLLIYY. The chain crosses the membrane as a helical span at residues 297-317; sequence FTVLLLLLFISTMETVLLAAL. Residues 318–365 are Cytoplasmic-facing; the sequence is QARGHLSARSSPIPTPRGEQQDHGDLGPHPEEAPGVKESRSWAEAADH. The segment at 325–354 is disordered; that stretch reads ARSSPIPTPRGEQQDHGDLGPHPEEAPGVK. Residues 336–354 are compositionally biased toward basic and acidic residues; that stretch reads EQQDHGDLGPHPEEAPGVK. Residues 366–386 form a helical membrane-spanning segment; it reads IFFLVYVVGVVCSQFFFIGFW. The Extracellular segment spans residues 387 to 409; sequence MWATCKSDPAPGEAIPHGGQPRL.

The protein belongs to the ligand-gated ion channel (TC 1.A.9) family. In terms of processing, glycosylated.

Its subcellular location is the cell membrane. It carries out the reaction Na(+)(in) = Na(+)(out). The enzyme catalyses K(+)(in) = K(+)(out). Functionally, ligand-gated cation channel that allows the movement of sodium and potassium monoatomic cations across cell membranes when activated by zinc (Zn2+), copper (Cu2+), and changes in pH. Could also transport cesium. The protein is Ligand-gated cation channel ZACN of Canis lupus familiaris (Dog).